The chain runs to 372 residues: Putative glutamate--cysteine ligase 2 (372 aa).

Belongs to the glutamate--cysteine ligase type 2 family. YbdK subfamily.

The catalysed reaction is L-cysteine + L-glutamate + ATP = gamma-L-glutamyl-L-cysteine + ADP + phosphate + H(+). ATP-dependent carboxylate-amine ligase which exhibits weak glutamate--cysteine ligase activity. In Cupriavidus metallidurans (strain ATCC 43123 / DSM 2839 / NBRC 102507 / CH34) (Ralstonia metallidurans), this protein is Putative glutamate--cysteine ligase 2.